The primary structure comprises 136 residues: Sec-independent protein translocase protein TatB (136 aa).

The helical transmembrane segment at 1–21 (MFDIGFPELALVAVIGLLVLG) threads the bilayer. Residues 89-136 (YEDMVEKNPATPMSSKASTPQTPSSGPDPQPVESHSHSDDASKQHDRS) are disordered. Residues 99–115 (TPMSSKASTPQTPSSGP) show a composition bias toward polar residues. Residues 122 to 136 (SHSHSDDASKQHDRS) show a composition bias toward basic and acidic residues.

The protein belongs to the TatB family. In terms of assembly, the Tat system comprises two distinct complexes: a TatABC complex, containing multiple copies of TatA, TatB and TatC subunits, and a separate TatA complex, containing only TatA subunits. Substrates initially bind to the TatABC complex, which probably triggers association of the separate TatA complex to form the active translocon.

Its subcellular location is the cell inner membrane. Functionally, part of the twin-arginine translocation (Tat) system that transports large folded proteins containing a characteristic twin-arginine motif in their signal peptide across membranes. Together with TatC, TatB is part of a receptor directly interacting with Tat signal peptides. TatB may form an oligomeric binding site that transiently accommodates folded Tat precursor proteins before their translocation. This Hahella chejuensis (strain KCTC 2396) protein is Sec-independent protein translocase protein TatB.